Consider the following 445-residue polypeptide: Histamine H3 receptor (445 aa).

Over 1 to 40 the chain is Extracellular; the sequence is MERAPPDGLMNASGALAGEAAAAAGGARTFSAAWTAVLAA. Asparagine 11 is a glycosylation site (N-linked (GlcNAc...) asparagine). Residues 41 to 61 form a helical membrane-spanning segment; it reads LMALLIVATVLGNALVMLAFV. At 62-71 the chain is on the cytoplasmic side; that stretch reads ADSSLRTQNN. A helical transmembrane segment spans residues 72–92; the sequence is FFLLNLAISDFLVGVFCIPLY. Topologically, residues 93–109 are extracellular; that stretch reads VPYVLTGRWTFGRGLCK. Cysteines 108 and 189 form a disulfide. Residues 110 to 130 traverse the membrane as a helical segment; the sequence is LWLVVDYLLCTSSVFNIVLIS. Topologically, residues 131–157 are cytoplasmic; sequence YDRFLSVTRAVSYRAQQGDTRRAVRKM. A helical membrane pass occupies residues 158–178; sequence VLVWVLAFLLYGPAILSWEYL. The Extracellular segment spans residues 179–197; sequence SGGSSIPEGHCYAEFFYNW. A helical membrane pass occupies residues 198 to 218; the sequence is YFLITASTLEFFTPFLSVTFF. The Cytoplasmic portion of the chain corresponds to 219 to 359; that stretch reads NLSIYLNIQR…LSRDKKVAKS (141 aa). Disordered stretches follow at residues 236 to 264 and 288 to 336; these read GGAREAGPDPLPEAQSSPPQPPPGCWGCW and AGEA…LEKR. A compositionally biased stretch (low complexity) spans 299–312; the sequence is AAASPTSSSGSSSR. The helical transmembrane segment at 360–380 threads the bilayer; the sequence is LAIIVSIFGLCWAPYTLLMII. Topologically, residues 381–398 are extracellular; that stretch reads RAACHGHCVPDYWYETSF. The chain crosses the membrane as a helical span at residues 399–419; it reads WLLWANSAVNPVLYPLCHYSF. Residues 420-445 are Cytoplasmic-facing; it reads RRAFTKLLCPQKLKVQPHSSLEHCWK. The residue at position 439 (serine 439) is a Phosphoserine.

Belongs to the G-protein coupled receptor 1 family. Expressed widely and abundantly throughout the brain. Highly expressed in discrete neuronal populations such as pyramidal cells in cerebral cortex or cerebellar Purkinje cells.

The protein localises to the cell membrane. Its function is as follows. The H3 subclass of histamine receptors could mediate the histamine signals in CNS and peripheral nervous system. Signals through the inhibition of adenylate cyclase and displays high constitutive activity (spontaneous activity in the absence of agonist). This is Histamine H3 receptor (HRH3) from Cavia porcellus (Guinea pig).